The primary structure comprises 507 residues: 2,3-bisphosphoglycerate-independent phosphoglycerate mutase (507 aa).

The Mn(2+) site is built by D13 and S63. S63 serves as the catalytic Phosphoserine intermediate. Substrate-binding positions include H124, 153–154 (RD), R183, R189, 254–257 (RADR), and K330. 5 residues coordinate Mn(2+): D396, H400, D437, H438, and H456.

It belongs to the BPG-independent phosphoglycerate mutase family. As to quaternary structure, monomer. Mn(2+) serves as cofactor.

It catalyses the reaction (2R)-2-phosphoglycerate = (2R)-3-phosphoglycerate. Its pathway is carbohydrate degradation; glycolysis; pyruvate from D-glyceraldehyde 3-phosphate: step 3/5. Its function is as follows. Catalyzes the interconversion of 2-phosphoglycerate and 3-phosphoglycerate. This Paracoccus denitrificans (strain Pd 1222) protein is 2,3-bisphosphoglycerate-independent phosphoglycerate mutase.